A 396-amino-acid chain; its full sequence is MSLPFSQDERDLAAGGILTIDLAALRHNYSAIATRIAPTRTAAVVKADAYGLGASRVAPAFYEAGCRDFFVAHLGEAVALKPFLKPDATLYVLNGLQPGTQAACAREGILPVLNSLEQVENWAALATRLGKKLPALLQFDTGMSRLGLSAKEFDRLLENVTLLSRIDIKFAISHLANGDEPGNAANARQLAKMTALLARLPKLPAALANSGGTFLGKTYYFDLARPGIALYGIDPERQHDFSDKVAHENKKPKHSILPVLTLSARVIQVRDVDKGATVGYGGTYVANGPMRIATIAVGYADGLFRSLSNKGAAFFGDTRLPIIGRVSMDSITLDVTSLPEGTLKLGSLVELIGPHQRLEDVARDCDTIPYEILTALGNRYARVYVYVNGGGTSTTA.

The active-site Proton acceptor; specific for D-alanine is the Lys46. Lys46 is modified (N6-(pyridoxal phosphate)lysine). Arg145 serves as a coordination point for substrate. The active-site Proton acceptor; specific for L-alanine is the Tyr280. Substrate is bound at residue Met328.

It belongs to the alanine racemase family. Pyridoxal 5'-phosphate is required as a cofactor.

It carries out the reaction L-alanine = D-alanine. Its pathway is amino-acid biosynthesis; D-alanine biosynthesis; D-alanine from L-alanine: step 1/1. Functionally, catalyzes the interconversion of L-alanine and D-alanine. May also act on other amino acids. This Brucella suis (strain ATCC 23445 / NCTC 10510) protein is Alanine racemase (alr).